The sequence spans 191 residues: dTTP/UTP pyrophosphatase (191 aa).

The active-site Proton acceptor is the D65.

Belongs to the Maf family. YhdE subfamily. Requires a divalent metal cation as cofactor.

It is found in the cytoplasm. It catalyses the reaction dTTP + H2O = dTMP + diphosphate + H(+). The enzyme catalyses UTP + H2O = UMP + diphosphate + H(+). Nucleoside triphosphate pyrophosphatase that hydrolyzes dTTP and UTP. May have a dual role in cell division arrest and in preventing the incorporation of modified nucleotides into cellular nucleic acids. In Leptospira biflexa serovar Patoc (strain Patoc 1 / Ames), this protein is dTTP/UTP pyrophosphatase.